The sequence spans 97 residues: Aspartyl/glutamyl-tRNA(Asn/Gln) amidotransferase subunit C (97 aa).

It belongs to the GatC family. As to quaternary structure, heterotrimer of A, B and C subunits.

It carries out the reaction L-glutamyl-tRNA(Gln) + L-glutamine + ATP + H2O = L-glutaminyl-tRNA(Gln) + L-glutamate + ADP + phosphate + H(+). It catalyses the reaction L-aspartyl-tRNA(Asn) + L-glutamine + ATP + H2O = L-asparaginyl-tRNA(Asn) + L-glutamate + ADP + phosphate + 2 H(+). Allows the formation of correctly charged Asn-tRNA(Asn) or Gln-tRNA(Gln) through the transamidation of misacylated Asp-tRNA(Asn) or Glu-tRNA(Gln) in organisms which lack either or both of asparaginyl-tRNA or glutaminyl-tRNA synthetases. The reaction takes place in the presence of glutamine and ATP through an activated phospho-Asp-tRNA(Asn) or phospho-Glu-tRNA(Gln). This Prochlorococcus marinus (strain AS9601) protein is Aspartyl/glutamyl-tRNA(Asn/Gln) amidotransferase subunit C.